Consider the following 208-residue polypeptide: Thymidylate kinase (208 aa).

Residue 10–17 (GIDGSGKT) coordinates ATP.

Belongs to the thymidylate kinase family.

The catalysed reaction is dTMP + ATP = dTDP + ADP. Its function is as follows. Phosphorylation of dTMP to form dTDP in both de novo and salvage pathways of dTTP synthesis. The protein is Thymidylate kinase of Ligilactobacillus salivarius (strain UCC118) (Lactobacillus salivarius).